Here is a 186-residue protein sequence, read N- to C-terminus: MAASESKESPANNPGLHTTIDEATKGYFMQQTMFRIKDPKVSLDFYSRVLGMSLLKRLDFPEMKFSLYFMGYEDTTEAPSNPVDRTVWTFAQKATIELTHNWGTESDPEFKGYHNGNSDPRGFGHIGITVDDTYKACERFQNLGVEFVKKPDDGKMKGIAFIKDPDGYWIELFDRKTIGNVTEGNA.

One can recognise a VOC domain in the interval 28 to 175 (FMQQTMFRIK…DGYWIELFDR (148 aa)). Substrate contacts are provided by Gln31 and Arg35. Gln31 is a binding site for Zn(2+). Residue Glu97 coordinates Zn(2+). Residues Asn101, Arg121, His125, and 155 to 156 (KM) each bind substrate. Residue His125 participates in Zn(2+) binding. Position 171 (Glu171) interacts with Zn(2+). The active-site Proton donor/acceptor is the Glu171.

Belongs to the glyoxalase I family. It depends on Zn(2+) as a cofactor.

It carries out the reaction (R)-S-lactoylglutathione = methylglyoxal + glutathione. Its pathway is secondary metabolite metabolism; methylglyoxal degradation; (R)-lactate from methylglyoxal: step 1/2. Its function is as follows. Catalyzes the conversion of hemimercaptal, formed from methylglyoxal and glutathione, to S-lactoylglutathione. In Cicer arietinum (Chickpea), this protein is Lactoylglutathione lyase.